Here is a 167-residue protein sequence, read N- to C-terminus: Small ribosomal subunit protein uS5 (167 aa).

The region spanning Leu-19–Cys-82 is the S5 DRBM domain.

This sequence belongs to the universal ribosomal protein uS5 family. As to quaternary structure, part of the 30S ribosomal subunit. Contacts proteins S4 and S8.

With S4 and S12 plays an important role in translational accuracy. In terms of biological role, located at the back of the 30S subunit body where it stabilizes the conformation of the head with respect to the body. The protein is Small ribosomal subunit protein uS5 of Protochlamydia amoebophila (strain UWE25).